The sequence spans 252 residues: Triosephosphate isomerase (252 aa).

10-12 (NWK) is a binding site for substrate. The Electrophile role is filled by His96. Glu168 serves as the catalytic Proton acceptor. Residues Gly174, Ser214, and 235–236 (GG) contribute to the substrate site.

It belongs to the triosephosphate isomerase family. Homodimer.

The protein resides in the cytoplasm. It catalyses the reaction D-glyceraldehyde 3-phosphate = dihydroxyacetone phosphate. It functions in the pathway carbohydrate biosynthesis; gluconeogenesis. Its pathway is carbohydrate degradation; glycolysis; D-glyceraldehyde 3-phosphate from glycerone phosphate: step 1/1. Functionally, involved in the gluconeogenesis. Catalyzes stereospecifically the conversion of dihydroxyacetone phosphate (DHAP) to D-glyceraldehyde-3-phosphate (G3P). The polypeptide is Triosephosphate isomerase (Lactobacillus acidophilus (strain ATCC 700396 / NCK56 / N2 / NCFM)).